Consider the following 214-residue polypeptide: Large ribosomal subunit protein bL25 (214 aa).

Residues 193–214 are disordered; sequence PRAAAEEEDTGAEGDVEAADAE. The span at 198 to 214 shows a compositional bias: acidic residues; it reads EEEDTGAEGDVEAADAE.

This sequence belongs to the bacterial ribosomal protein bL25 family. CTC subfamily. Part of the 50S ribosomal subunit; part of the 5S rRNA/L5/L18/L25 subcomplex. Contacts the 5S rRNA. Binds to the 5S rRNA independently of L5 and L18.

Functionally, this is one of the proteins that binds to the 5S RNA in the ribosome where it forms part of the central protuberance. This chain is Large ribosomal subunit protein bL25, found in Nitrosococcus oceani (strain ATCC 19707 / BCRC 17464 / JCM 30415 / NCIMB 11848 / C-107).